The chain runs to 209 residues: Uracil phosphoribosyltransferase (209 aa).

5-phospho-alpha-D-ribose 1-diphosphate-binding positions include Arg-79, Arg-104, and 131 to 139; that span reads DPMLATGGS. Residues Ile-194 and 199–201 contribute to the uracil site; that span reads GDA. Asp-200 serves as a coordination point for 5-phospho-alpha-D-ribose 1-diphosphate.

This sequence belongs to the UPRTase family. Mg(2+) serves as cofactor.

The enzyme catalyses UMP + diphosphate = 5-phospho-alpha-D-ribose 1-diphosphate + uracil. It functions in the pathway pyrimidine metabolism; UMP biosynthesis via salvage pathway; UMP from uracil: step 1/1. Allosterically activated by GTP. Catalyzes the conversion of uracil and 5-phospho-alpha-D-ribose 1-diphosphate (PRPP) to UMP and diphosphate. This chain is Uracil phosphoribosyltransferase, found in Natranaerobius thermophilus (strain ATCC BAA-1301 / DSM 18059 / JW/NM-WN-LF).